A 550-amino-acid chain; its full sequence is Metal transporter Nramp3 (550 aa).

A compositionally biased stretch (polar residues) spans 1–26; it reads MSGPMQRSSQPQFISSVERNNQSNGP. Residues 1–30 form a disordered region; the sequence is MSGPMQRSSQPQFISSVERNNQSNGPGTPL. Helical transmembrane passes span 50–70, 83–103, 127–147, 158–178, 185–205, 233–253, 276–296, 333–353, 368–390, 397–417, 435–455, and 473–493; these read LFSY…PGNF, ELLW…SLAA, FILW…EVIG, IPVW…LLLQ, LEFL…VELG, ISLL…ALVL, AFAL…SGAV, LFAV…TYAG, WIRN…IIGG, LIII…VPLL, ISVI…YFLI, and VFSG…ILYL. The disordered stretch occupies residues 523-550; the sequence is GEGSLGHLPREDISSMQLPQQRTASDLD. The span at 536–550 shows a compositional bias: polar residues; that stretch reads SSMQLPQQRTASDLD.

Belongs to the NRAMP (TC 2.A.55) family.

The protein resides in the membrane. Probable metal transporter. This Oryza sativa subsp. japonica (Rice) protein is Metal transporter Nramp3 (NRAMP3).